A 300-amino-acid chain; its full sequence is Bifunctional protein FolD (300 aa).

Residues 169–171 (GHS) and Ile-235 contribute to the NADP(+) site.

Belongs to the tetrahydrofolate dehydrogenase/cyclohydrolase family. In terms of assembly, homodimer.

It carries out the reaction (6R)-5,10-methylene-5,6,7,8-tetrahydrofolate + NADP(+) = (6R)-5,10-methenyltetrahydrofolate + NADPH. The catalysed reaction is (6R)-5,10-methenyltetrahydrofolate + H2O = (6R)-10-formyltetrahydrofolate + H(+). The protein operates within one-carbon metabolism; tetrahydrofolate interconversion. Catalyzes the oxidation of 5,10-methylenetetrahydrofolate to 5,10-methenyltetrahydrofolate and then the hydrolysis of 5,10-methenyltetrahydrofolate to 10-formyltetrahydrofolate. The protein is Bifunctional protein FolD of Rhodobacter capsulatus (strain ATCC BAA-309 / NBRC 16581 / SB1003).